The following is a 176-amino-acid chain: MSKTVEPACLVPVGKVTRTHGIRGALKIFPYGESLAAQAAGERFFLRSKNGGYCTLTLIGLRAQGRMLVCGFEEIKDVNGAQPFVGEEIFLPEDRLPPVSEGEYYHYRLIGLDIVTLDGESLGVLRKIIETGGNDVYVAEREGREILIPAIEDVIREIDLERKRMVVDLPEGLVDA.

Positions 101-173 (EGEYYHYRLI…RMVVDLPEGL (73 aa)) constitute a PRC barrel domain.

The protein belongs to the RimM family. As to quaternary structure, binds ribosomal protein uS19.

The protein localises to the cytoplasm. Its function is as follows. An accessory protein needed during the final step in the assembly of 30S ribosomal subunit, possibly for assembly of the head region. Essential for efficient processing of 16S rRNA. May be needed both before and after RbfA during the maturation of 16S rRNA. It has affinity for free ribosomal 30S subunits but not for 70S ribosomes. The chain is Ribosome maturation factor RimM from Syntrophobacter fumaroxidans (strain DSM 10017 / MPOB).